The primary structure comprises 60 residues: Short neurotoxin 1 (60 aa).

4 cysteine pairs are disulfide-bonded: cysteine 3-cysteine 22, cysteine 17-cysteine 39, cysteine 41-cysteine 52, and cysteine 53-cysteine 58.

Belongs to the three-finger toxin family. Short-chain subfamily. Type I alpha-neurotoxin sub-subfamily. As to expression, expressed by the venom gland.

It localises to the secreted. In terms of biological role, binds to muscle nicotinic acetylcholine receptor (nAChR) and inhibit acetylcholine from binding to the receptor, thereby impairing neuromuscular transmission. The protein is Short neurotoxin 1 of Hydrophis ornatus (Ornate reef seasnake).